The sequence spans 178 residues: ATP synthase subunit delta (178 aa).

It belongs to the ATPase delta chain family. In terms of assembly, F-type ATPases have 2 components, F(1) - the catalytic core - and F(0) - the membrane proton channel. F(1) has five subunits: alpha(3), beta(3), gamma(1), delta(1), epsilon(1). F(0) has three main subunits: a(1), b(2) and c(10-14). The alpha and beta chains form an alternating ring which encloses part of the gamma chain. F(1) is attached to F(0) by a central stalk formed by the gamma and epsilon chains, while a peripheral stalk is formed by the delta and b chains.

Its subcellular location is the cell membrane. Its function is as follows. F(1)F(0) ATP synthase produces ATP from ADP in the presence of a proton or sodium gradient. F-type ATPases consist of two structural domains, F(1) containing the extramembraneous catalytic core and F(0) containing the membrane proton channel, linked together by a central stalk and a peripheral stalk. During catalysis, ATP synthesis in the catalytic domain of F(1) is coupled via a rotary mechanism of the central stalk subunits to proton translocation. Functionally, this protein is part of the stalk that links CF(0) to CF(1). It either transmits conformational changes from CF(0) to CF(1) or is implicated in proton conduction. This chain is ATP synthase subunit delta, found in Mycoplasma pneumoniae (strain ATCC 29342 / M129 / Subtype 1) (Mycoplasmoides pneumoniae).